We begin with the raw amino-acid sequence, 976 residues long: 5'-3' exoribonuclease 2 homolog (976 aa).

The CCHC-type zinc-finger motif lies at R264–G281. Basic and acidic residues predominate over residues D411–K420. The disordered stretch occupies residues D411–Q442. Positions D535–E788 are interaction with paxt-1. The disordered stretch occupies residues W815–R976. Residues D856–G866 show a composition bias toward low complexity.

It belongs to the 5'-3' exonuclease family. XRN2/RAT1 subfamily. Interacts with paxt-1 (via N-terminus); the interaction is direct and results in stabilization of xrn-2 in the complex.

It localises to the nucleus. Its function is as follows. Possesses 5'-&gt;3' exoribonuclease activity. Plays a role in maintenance of steady-state concentration and turnover of microRNAs (miRNA) by degradation of mature miRNA. Degradation role is enhanced when in complex with paxt-1. Partially redundant to xrn-1 in miRNA guide strand degradation. Implicated in differential regulation of mRNAs such as let-7 by controlling the accumulation of mature miRNA. Positively regulates molting of the pharyngeal cuticle. The polypeptide is 5'-3' exoribonuclease 2 homolog (Caenorhabditis briggsae).